Consider the following 183-residue polypeptide: ADP-ribosylation factor-like protein 5 (183 aa).

Residues 27 to 34, 70 to 74, and 129 to 132 contribute to the GTP site; these read GLNAAGKT, DLGGQ, and NKQD.

It belongs to the small GTPase superfamily. Arf family.

Its function is as follows. May bind and exchange GTP and GDP. This chain is ADP-ribosylation factor-like protein 5 (arl5), found in Dictyostelium discoideum (Social amoeba).